A 345-amino-acid chain; its full sequence is Dihydroorotate dehydrogenase (quinone) (345 aa).

Residues 65–69 and threonine 89 contribute to the FMN site; that span reads AGLDK. Substrate is bound at residue lysine 69. 114–118 contacts substrate; it reads NRMGF. Positions 146 and 179 each coordinate FMN. Position 179 (asparagine 179) interacts with substrate. Serine 182 serves as the catalytic Nucleophile. Asparagine 184 is a binding site for substrate. Lysine 224 and threonine 252 together coordinate FMN. 253–254 is a substrate binding site; it reads NT. Residues glycine 275, glycine 304, and 325–326 each bind FMN; that span reads YT.

The protein belongs to the dihydroorotate dehydrogenase family. Type 2 subfamily. Monomer. The cofactor is FMN.

The protein resides in the cell membrane. It carries out the reaction (S)-dihydroorotate + a quinone = orotate + a quinol. Its pathway is pyrimidine metabolism; UMP biosynthesis via de novo pathway; orotate from (S)-dihydroorotate (quinone route): step 1/1. Functionally, catalyzes the conversion of dihydroorotate to orotate with quinone as electron acceptor. This Janthinobacterium sp. (strain Marseille) (Minibacterium massiliensis) protein is Dihydroorotate dehydrogenase (quinone).